The following is a 156-amino-acid chain: MSRRHKAEKREINPDPKFGDLVVTKFMNAIMLHGKKSVAESIVYGAFDVVEAKSKAEPIAIFHQALENVAPHVEVRSRRVGGATYQVPVDVRPERRQALAIRWLIIAARKRNETTMVDRLSGELLDASNNRGSAVKKREDTHKMADANRAFSHYRW.

It belongs to the universal ribosomal protein uS7 family. In terms of assembly, part of the 30S ribosomal subunit. Contacts proteins S9 and S11.

One of the primary rRNA binding proteins, it binds directly to 16S rRNA where it nucleates assembly of the head domain of the 30S subunit. Is located at the subunit interface close to the decoding center, probably blocks exit of the E-site tRNA. The sequence is that of Small ribosomal subunit protein uS7 from Allorhizobium ampelinum (strain ATCC BAA-846 / DSM 112012 / S4) (Agrobacterium vitis (strain S4)).